The chain runs to 175 residues: NADH-ubiquinone oxidoreductase chain 6 (175 aa).

5 helical membrane passes run 1–21 (MMTY…VGFS), 25–45 (SPIY…GIIM), 47–67 (FGGS…MLVV), 88–108 (TVMG…LYVL), and 149–169 (YGAW…LVIL).

This sequence belongs to the complex I subunit 6 family. In terms of assembly, core subunit of respiratory chain NADH dehydrogenase (Complex I) which is composed of 45 different subunits.

It localises to the mitochondrion inner membrane. The enzyme catalyses a ubiquinone + NADH + 5 H(+)(in) = a ubiquinol + NAD(+) + 4 H(+)(out). In terms of biological role, core subunit of the mitochondrial membrane respiratory chain NADH dehydrogenase (Complex I) which catalyzes electron transfer from NADH through the respiratory chain, using ubiquinone as an electron acceptor. Essential for the catalytic activity and assembly of complex I. This Equus caballus (Horse) protein is NADH-ubiquinone oxidoreductase chain 6 (MT-ND6).